Here is a 293-residue protein sequence, read N- to C-terminus: Homeobox protein ceh-24 (293 aa).

Basic and acidic residues-rich tracts occupy residues 1-15 (MSEKESPSPQHKKDE) and 22-38 (QETKDSEDDATKKMKIK). 2 disordered regions span residues 1-38 (MSEKESPSPQHKKDEVVDDTEQETKDSEDDATKKMKIK) and 203-256 (EKEK…SNGV). Positions 144–203 (RRKRRVLFSQAQVYELERRFKQAKYLTAPEREQLANSIRLTPTQVKIWFQNHRYKCKRQE) form a DNA-binding region, homeobox.

Belongs to the NK-2 homeobox family. Expressed in the 8 vulval muscles, 8-10 ventral neurons in the head and in the most posterior pharyngeal muscle cell, m8.

The protein resides in the nucleus. Its function is as follows. Probable transcriptional regulator that is required in neural development for the normal formation of sublateral cholinergic motor neuron processes. Plays a role in regulating the expression of acetylcholine transporter protein unc-17 in the sublateral processes. In particular, it is required in sublateral motor neurons for a left-right turning behavior that occurs during the lethargus phase of the normal sleep process called 'flipping'. During 'flipping' animals rotate 180 degrees about their longitudinal axis. The protein is Homeobox protein ceh-24 of Caenorhabditis briggsae.